Consider the following 351-residue polypeptide: Trans-enoyl reductase grgB (351 aa).

Residues 10–346 form the Enoyl reductase (ER) domain; it reads GAESGGYRLA…GKVHAKKLVV (337 aa). Residues 161-164, 184-187, Tyr-202, 249-250, and 339-340 contribute to the NADP(+) site; these read ATAT, SPAN, LE, and VH.

The protein belongs to the zinc-containing alcohol dehydrogenase family.

Its pathway is secondary metabolite biosynthesis. Trans-enoyl reductase; part of the gene cluster that mediates the biosynthesis of gregatin A, a fungal polyketide featuring an alkylated furanone core. The PKS grgA synthesizes C11 and C4 polyketide chains in the presence and absence of the trans-enoyl reductase grgB, respectively. The polyketide transferase grgF is then responsible for the fusion of the two carbon chains to produce the furanone skeleton of gregatin A. Next, the cytochrome P450 monooxygenase grgG accepts performs the oxidative cyclization to furnish the gregatin scaffold and leads to the formation of desmethylgregatin A. Finally, the O-methyltransferase grgD methylates the carboxyl group of desmethylgregatin A to provide gregatin A. This Penicillium sp protein is Trans-enoyl reductase grgB.